Consider the following 188-residue polypeptide: Ribosome maturation factor RimM (188 aa).

Residues 96 to 169 (DDEFYYADLE…RILIDPMAAG (74 aa)) enclose the PRC barrel domain.

It belongs to the RimM family. Binds ribosomal protein uS19.

It localises to the cytoplasm. Its function is as follows. An accessory protein needed during the final step in the assembly of 30S ribosomal subunit, possibly for assembly of the head region. Essential for efficient processing of 16S rRNA. May be needed both before and after RbfA during the maturation of 16S rRNA. It has affinity for free ribosomal 30S subunits but not for 70S ribosomes. This chain is Ribosome maturation factor RimM, found in Agrobacterium fabrum (strain C58 / ATCC 33970) (Agrobacterium tumefaciens (strain C58)).